The sequence spans 188 residues: Elongation factor P (188 aa).

Lys34 is modified (N6-(3,6-diaminohexanoyl)-5-hydroxylysine).

The protein belongs to the elongation factor P family. Is beta-lysylated on the epsilon-amino group of Lys-34 by the combined action of EpmA and EpmB, and then hydroxylated on the C5 position of the same residue by EpmC. Lysylation is critical for the stimulatory effect of EF-P on peptide-bond formation. The lysylation moiety would extend toward the peptidyltransferase center and stabilize the terminal 3-CCA end of the tRNA. The hydroxylation of the C5 position on Lys-34 would allow additional potential stabilizing hydrogen-bond interactions with the P-tRNA.

The protein localises to the cytoplasm. It participates in protein biosynthesis; polypeptide chain elongation. In terms of biological role, involved in peptide bond synthesis. Alleviates ribosome stalling that occurs when 3 or more consecutive Pro residues or the sequence PPG is present in a protein, possibly by augmenting the peptidyl transferase activity of the ribosome. Modification of Lys-34 is required for alleviation. In Salmonella arizonae (strain ATCC BAA-731 / CDC346-86 / RSK2980), this protein is Elongation factor P.